A 148-amino-acid chain; its full sequence is Ribonuclease H (148 aa).

The RNase H type-1 domain maps to 1–143 (MNQVVIYTDG…ADMLANKGVE (143 aa)). The Mg(2+) site is built by D9, E47, D69, and D135.

It belongs to the RNase H family. Monomer. It depends on Mg(2+) as a cofactor.

It is found in the cytoplasm. It carries out the reaction Endonucleolytic cleavage to 5'-phosphomonoester.. In terms of biological role, endonuclease that specifically degrades the RNA of RNA-DNA hybrids. The chain is Ribonuclease H from Acidovorax sp. (strain JS42).